A 132-amino-acid polypeptide reads, in one-letter code: Amicyanin (132 aa).

A signal peptide spans 1-26 (MISAKTLRPAIAAIALFAIGATGAWA). At Q27 the chain carries Pyrrolidone carboxylic acid. The region spanning 27–132 (QDKITVTSEK…PFMRGKVIVE (106 aa)) is the Plastocyanin-like domain. The Cu cation site is built by H80, C119, H122, and M125.

The cofactor is Cu cation.

The protein resides in the periplasm. It participates in one-carbon metabolism; methylamine degradation. Primary acceptor of electrons from methylamine dehydrogenase. Passes those electrons on either a soluble cytochrome c or to pseudoazurin. The sequence is that of Amicyanin (mauC) from Paracoccus versutus (Thiobacillus versutus).